We begin with the raw amino-acid sequence, 182 residues long: Adenine phosphoribosyltransferase (182 aa).

It belongs to the purine/pyrimidine phosphoribosyltransferase family. In terms of assembly, homodimer.

It is found in the cytoplasm. The enzyme catalyses AMP + diphosphate = 5-phospho-alpha-D-ribose 1-diphosphate + adenine. It participates in purine metabolism; AMP biosynthesis via salvage pathway; AMP from adenine: step 1/1. Catalyzes a salvage reaction resulting in the formation of AMP, that is energically less costly than de novo synthesis. The polypeptide is Adenine phosphoribosyltransferase (Campylobacter curvus (strain 525.92)).